The following is a 2058-amino-acid chain: Unconventional myosin-X (2058 aa).

M1 bears the N-acetylmethionine mark. Residues 63-739 enclose the Myosin motor domain; sequence EGVDDMASLT…LEQKLEKRRE (677 aa). Residues N104, Y113, 160–165, and N215 contribute to the ATP site; that span reads GAGKTE. The actin-binding stretch occupies residues 619 to 641; sequence LHSLMATLSSSNPFFVRCIKPNM. 3 IQ domains span residues 742-763, 764-787, and 788-817; these read VSHA…KQYR, KVLY…RFLH, and LKKA…EKRE. Residues 814 to 883 form an SAH region; it reads EKREQEEKKK…LTRELEKQKE (70 aa). Disordered stretches follow at residues 819–840 and 847–866; these read EEKK…RERE and ELRA…EALQ. The segment covering 847 to 861 has biased composition (basic and acidic residues); sequence ELRAQQEEETRKQQE. The stretch at 884 to 934 forms a coiled coil; it reads NKQVEEILRLEKEIEDLQRMKEQQELSLTEASLQKLQERRDQELRRLEEEA. 3 positions are modified to phosphoserine: S962, S965, and S968. Residues 964 to 1090 are disordered; sequence GSEFSSELAE…DLPSPDGDYD (127 aa). Positions 989-1003 are enriched in acidic residues; sequence PEEEVDEGFEADDDA. Polar residues predominate over residues 1040–1049; sequence VVPTSPSADS. The span at 1060 to 1071 shows a compositional bias: low complexity; it reads SGSLHNSSSGES. At T1158 the chain carries Phosphothreonine. 2 PH domains span residues 1212 to 1310 and 1392 to 1497; these read EALK…QVHA and EFIV…NVTD. In terms of domain architecture, MyTH4 spans 1547-1695; sequence LPYGDINLNL…PSRDEIEALI (149 aa). The FERM domain occupies 1700–2044; the sequence is MTSTVYCHGG…AYISMIVKKR (345 aa).

Belongs to the TRAFAC class myosin-kinesin ATPase superfamily. Myosin family. Monomer, when in an inactive conformation in the cytosol. Homodimer in its active, membrane-bound conformation; antiparallel coiled coil-mediated dimer formation. Interacts strongly with CALM3 and weakly with CALM, the CALM3 interaction is essential for function in filopodial extension and motility. Interacts with ECPAS. Interacts with NEO1. Interacts with ITGB1 and ITGB3. Interacts with VASP. Interacts with DCC and ITGB5; the presence of DCC inhibits ITGB5 binding. Interacts with tubulin; ITGB5 or DCC binding inhibits tubulin binding. In terms of processing, the initiator methionine for isoform Headless is removed. In terms of tissue distribution, ubiquitous.

It localises to the cytoplasm. The protein resides in the cytosol. Its subcellular location is the cell projection. It is found in the lamellipodium. The protein localises to the ruffle. It localises to the cytoskeleton. The protein resides in the filopodium tip. Its subcellular location is the cell cortex. It is found in the filopodium membrane. In terms of biological role, myosins are actin-based motor molecules with ATPase activity. Unconventional myosins serve in intracellular movements. MYO10 binds to actin filaments and actin bundles and functions as a plus end-directed motor. Moves with higher velocity and takes larger steps on actin bundles than on single actin filaments. The tail domain binds to membranous compartments containing phosphatidylinositol 3,4,5-trisphosphate or integrins, and mediates cargo transport along actin filaments. Regulates cell shape, cell spreading and cell adhesion. Stimulates the formation and elongation of filopodia. In hippocampal neurons it induces the formation of dendritic filopodia by trafficking the actin-remodeling protein VASP to the tips of filopodia, where it promotes actin elongation. Plays a role in formation of the podosome belt in osteoclasts. Functions as a dominant-negative regulator of isoform 1, suppressing its filopodia-inducing and axon outgrowth-promoting activities. In hippocampal neurons, it increases VASP retention in spine heads to induce spine formation and spine head expansion. This is Unconventional myosin-X (MYO10) from Homo sapiens (Human).